A 622-amino-acid chain; its full sequence is Probable potassium transport system protein Kup 1 (622 aa).

12 helical membrane-spanning segments follow: residues 7 to 27 (LLVL…TSPL), 50 to 70 (LISL…VLFL), 96 to 116 (TAIL…DAMI), 132 to 152 (VTPA…LLLF), 165 to 185 (FFGP…FVHI), 210 to 230 (VGIV…ALYA), 244 to 264 (WFTV…AFVL), 282 to 302 (ALLP…QAVI), 334 to 354 (IYLP…VFLF), 360 to 380 (LATA…VLSF), 391 to 411 (TWWA…FLGA), and 416 to 436 (IHDG…IMWT).

It belongs to the HAK/KUP transporter (TC 2.A.72) family.

It is found in the cell inner membrane. It carries out the reaction K(+)(in) + H(+)(in) = K(+)(out) + H(+)(out). Functionally, transport of potassium into the cell. Likely operates as a K(+):H(+) symporter. This chain is Probable potassium transport system protein Kup 1, found in Rhizobium meliloti (strain 1021) (Ensifer meliloti).